The sequence spans 155 residues: Cytochrome c-type biogenesis protein CcmE (155 aa).

Topologically, residues 1–8 (MNPLRKKR) are cytoplasmic. Residues 9-29 (LLIIAALLAGVGLAMTLALGA) traverse the membrane as a helical; Signal-anchor for type II membrane protein segment. Over 30–155 (LKENINLFYT…GGSSTPAKQG (126 aa)) the chain is Periplasmic. 2 residues coordinate heme: His124 and Tyr128. The disordered stretch occupies residues 134 to 155 (TKALRDSGQAAPGGSSTPAKQG).

The protein belongs to the CcmE/CycJ family.

It localises to the cell inner membrane. Its function is as follows. Heme chaperone required for the biogenesis of c-type cytochromes. Transiently binds heme delivered by CcmC and transfers the heme to apo-cytochromes in a process facilitated by CcmF and CcmH. The polypeptide is Cytochrome c-type biogenesis protein CcmE (Pseudomonas savastanoi pv. phaseolicola (strain 1448A / Race 6) (Pseudomonas syringae pv. phaseolicola (strain 1448A / Race 6))).